Here is a 599-residue protein sequence, read N- to C-terminus: BICD family-like cargo adapter 1 (599 aa).

Residues methionine 1 to glycine 27 are disordered. The short motif at alanine 76–glycine 80 is the CC1 box element. Residues glycine 80 to leucine 341 adopt a coiled-coil conformation. The interval aspartate 352 to alanine 375 is disordered. The stretch at glutamate 405–arginine 536 forms a coiled coil.

This sequence belongs to the BICDR family. Part of a tripartite complex with dynein and dynactin, acts an adapter linking the dynein motor complex and dynactin. Interacts with KIF1C. Interacts with RAB6A and RAB6B; interaction is specific to Rab6.

It is found in the cytoplasm. The protein localises to the cytoskeleton. It localises to the microtubule organizing center. The protein resides in the centrosome. In terms of biological role, acts as an adapter protein linking the dynein motor complex to various cargos and converts dynein from a non-processive to a highly processive motor in the presence of dynactin. Facilitates the interaction between dynein and dynactin and activates dynein processivity (the ability to move along a microtubule for a long distance without falling off the track). Predominantly recruits 2 dyneins, which increases both the force and speed of the microtubule motor. Component of secretory vesicle machinery in developing neurons that acts as a regulator of neurite outgrowth. Regulates the secretory vesicle transport by controlling the accumulation of Rab6-containing secretory vesicles in the pericentrosomal region restricting anterograde secretory transport during the early phase of neuronal differentiation, thereby inhibiting neuritogenesis. The polypeptide is BICD family-like cargo adapter 1 (bicdl1) (Xenopus tropicalis (Western clawed frog)).